The primary structure comprises 395 residues: Elongation factor Tu (395 aa).

The tr-type G domain occupies 10–205; sequence KPHVNIGTIG…CDTWIPLPPR (196 aa). A G1 region spans residues 19-26; sequence GHVDHGKT. 19 to 26 contributes to the GTP binding site; sequence GHVDHGKT. Thr-26 is a binding site for Mg(2+). Residues 60–64 form a G2 region; it reads GITIN. The segment at 81–84 is G3; the sequence is DCPG. GTP-binding positions include 81–85 and 136–139; these read DCPGH and NKCD. The tract at residues 136–139 is G4; the sequence is NKCD. Residues 174 to 176 form a G5 region; it reads SAL.

The protein belongs to the TRAFAC class translation factor GTPase superfamily. Classic translation factor GTPase family. EF-Tu/EF-1A subfamily. As to quaternary structure, monomer.

It localises to the cytoplasm. The catalysed reaction is GTP + H2O = GDP + phosphate + H(+). In terms of biological role, GTP hydrolase that promotes the GTP-dependent binding of aminoacyl-tRNA to the A-site of ribosomes during protein biosynthesis. This chain is Elongation factor Tu, found in Parabacteroides distasonis (strain ATCC 8503 / DSM 20701 / CIP 104284 / JCM 5825 / NCTC 11152).